A 180-amino-acid chain; its full sequence is Large ribosomal subunit protein uL5 (180 aa).

The protein belongs to the universal ribosomal protein uL5 family. Part of the 50S ribosomal subunit; part of the 5S rRNA/L5/L18/L25 subcomplex. Contacts the 5S rRNA and the P site tRNA. Forms a bridge to the 30S subunit in the 70S ribosome.

Its function is as follows. This is one of the proteins that bind and probably mediate the attachment of the 5S RNA into the large ribosomal subunit, where it forms part of the central protuberance. In the 70S ribosome it contacts protein S13 of the 30S subunit (bridge B1b), connecting the 2 subunits; this bridge is implicated in subunit movement. Contacts the P site tRNA; the 5S rRNA and some of its associated proteins might help stabilize positioning of ribosome-bound tRNAs. The chain is Large ribosomal subunit protein uL5 from Streptococcus pyogenes serotype M1.